Here is a 303-residue protein sequence, read N- to C-terminus: 2-dehydropantoate 2-reductase (303 aa).

Residues 7–12 (GAGSLG), R35, N103, A129, and R131 contribute to the NADP(+) site. N103 lines the substrate pocket. The active-site Proton donor is K182. N186, N190, N200, and S250 together coordinate substrate. Position 262 (E262) interacts with NADP(+).

The protein belongs to the ketopantoate reductase family.

Its subcellular location is the cytoplasm. The enzyme catalyses (R)-pantoate + NADP(+) = 2-dehydropantoate + NADPH + H(+). It participates in cofactor biosynthesis; (R)-pantothenate biosynthesis; (R)-pantoate from 3-methyl-2-oxobutanoate: step 2/2. In terms of biological role, catalyzes the NADPH-dependent reduction of ketopantoate into pantoic acid. The polypeptide is 2-dehydropantoate 2-reductase (panE) (Pseudomonas aeruginosa (strain ATCC 15692 / DSM 22644 / CIP 104116 / JCM 14847 / LMG 12228 / 1C / PRS 101 / PAO1)).